A 458-amino-acid chain; its full sequence is tRNA modification GTPase MnmE (458 aa).

Residues Arg32, Glu89, and Lys128 each coordinate (6S)-5-formyl-5,6,7,8-tetrahydrofolate. A TrmE-type G domain is found at 224–381; that stretch reads GVRVVLAGRP…LCQRLKECAG (158 aa). Asn234 serves as a coordination point for K(+). GTP contacts are provided by residues 234 to 239, 253 to 259, and 278 to 281; these read NVGKSS, TDVPGTT, and DTAG. Ser238 contacts Mg(2+). Positions 253, 255, and 258 each coordinate K(+). Residue Thr259 coordinates Mg(2+). Lys458 contacts (6S)-5-formyl-5,6,7,8-tetrahydrofolate.

Belongs to the TRAFAC class TrmE-Era-EngA-EngB-Septin-like GTPase superfamily. TrmE GTPase family. As to quaternary structure, homodimer. Heterotetramer of two MnmE and two MnmG subunits. It depends on K(+) as a cofactor.

It localises to the cytoplasm. Exhibits a very high intrinsic GTPase hydrolysis rate. Involved in the addition of a carboxymethylaminomethyl (cmnm) group at the wobble position (U34) of certain tRNAs, forming tRNA-cmnm(5)s(2)U34. This Nitrosococcus oceani (strain ATCC 19707 / BCRC 17464 / JCM 30415 / NCIMB 11848 / C-107) protein is tRNA modification GTPase MnmE.